Consider the following 202-residue polypeptide: Peptide deformylase 2 (202 aa).

Fe cation contacts are provided by Cys-120 and His-162. Glu-163 is an active-site residue. His-166 is a Fe cation binding site.

This sequence belongs to the polypeptide deformylase family. Requires Fe(2+) as cofactor.

It catalyses the reaction N-terminal N-formyl-L-methionyl-[peptide] + H2O = N-terminal L-methionyl-[peptide] + formate. Removes the formyl group from the N-terminal Met of newly synthesized proteins. Requires at least a dipeptide for an efficient rate of reaction. N-terminal L-methionine is a prerequisite for activity but the enzyme has broad specificity at other positions. The sequence is that of Peptide deformylase 2 from Rickettsia conorii (strain ATCC VR-613 / Malish 7).